We begin with the raw amino-acid sequence, 88 residues long: Small ribosomal subunit protein uS15 (88 aa).

Positions 1–23 (MIASSVKAEVVKSNARSANDTGS) are disordered. Over residues 14–23 (NARSANDTGS) the composition is skewed to polar residues.

This sequence belongs to the universal ribosomal protein uS15 family. In terms of assembly, part of the 30S ribosomal subunit. Forms a bridge to the 50S subunit in the 70S ribosome, contacting the 23S rRNA.

Functionally, one of the primary rRNA binding proteins, it binds directly to 16S rRNA where it helps nucleate assembly of the platform of the 30S subunit by binding and bridging several RNA helices of the 16S rRNA. In terms of biological role, forms an intersubunit bridge (bridge B4) with the 23S rRNA of the 50S subunit in the ribosome. The chain is Small ribosomal subunit protein uS15 from Delftia acidovorans (strain DSM 14801 / SPH-1).